A 524-amino-acid chain; its full sequence is 11-oxo-beta-amyrin 30-oxidase (524 aa).

The chain crosses the membrane as a helical span at residues 9-29 (GTTVIISVLSVLLAVIPWYLL). Cys-472 is a heme binding site.

Belongs to the cytochrome P450 family. The cofactor is heme. In terms of tissue distribution, expressed in flowers. Detected in roots upon salt treatment.

Its subcellular location is the membrane. The enzyme catalyses 11-oxo-beta-amyrin + 3 reduced [NADPH--hemoprotein reductase] + 3 O2 = glycyrrhetinate + 3 oxidized [NADPH--hemoprotein reductase] + 4 H2O + 4 H(+). Functionally, involved in the biosynthesis of triterpenoid saponins. Catalyzes three sequential oxidation steps at C-30 of 11-oxo-beta-amyrin. Also able to catalyze sequential C-30 hydroxylation of beta-amyrin to produce 30-hydroxy-beta-amyrin and 11-deoxoglycyrrhetinic acid. The sequence is that of 11-oxo-beta-amyrin 30-oxidase (CYP72A63) from Medicago truncatula (Barrel medic).